The sequence spans 438 residues: V-type ATP synthase beta chain (438 aa).

Belongs to the ATPase alpha/beta chains family.

Its function is as follows. Produces ATP from ADP in the presence of a proton gradient across the membrane. The V-type beta chain is a regulatory subunit. This chain is V-type ATP synthase beta chain (atpB), found in Chlamydia trachomatis serovar D (strain ATCC VR-885 / DSM 19411 / UW-3/Cx).